The chain runs to 231 residues: MKVGIIGAMEQEVTILKEAMTNCQTVSKAGCTFFSGQINGVDVVLLQSGIGKVAAAVGTTILLDEYQPDVVINTGSAGGFDSSLNLGDVVISTEVRHHDTDVTAFGYEMGQMAGQPAAFKADEKLMDLAEKALAQMENTHAVRGLICTGDAFVCTAERQEFIRKHFPSVIAVEMEASAIAQTCHQFNTPFVVVRAISDVADKESPMSFEEFLPLAAKSSSEMVCKMLELTK.

The active-site Proton acceptor is Glu-12. Substrate contacts are provided by residues Gly-78, Val-153, and 174–175 (ME). Asp-198 serves as the catalytic Proton donor.

Belongs to the PNP/UDP phosphorylase family. MtnN subfamily.

It catalyses the reaction S-adenosyl-L-homocysteine + H2O = S-(5-deoxy-D-ribos-5-yl)-L-homocysteine + adenine. The enzyme catalyses S-methyl-5'-thioadenosine + H2O = 5-(methylsulfanyl)-D-ribose + adenine. The catalysed reaction is 5'-deoxyadenosine + H2O = 5-deoxy-D-ribose + adenine. It functions in the pathway amino-acid biosynthesis; L-methionine biosynthesis via salvage pathway; S-methyl-5-thio-alpha-D-ribose 1-phosphate from S-methyl-5'-thioadenosine (hydrolase route): step 1/2. Catalyzes the irreversible cleavage of the glycosidic bond in both 5'-methylthioadenosine (MTA) and S-adenosylhomocysteine (SAH/AdoHcy) to adenine and the corresponding thioribose, 5'-methylthioribose and S-ribosylhomocysteine, respectively. Also cleaves 5'-deoxyadenosine, a toxic by-product of radical S-adenosylmethionine (SAM) enzymes, into 5-deoxyribose and adenine. This is 5'-methylthioadenosine/S-adenosylhomocysteine nucleosidase from Vibrio campbellii (strain ATCC BAA-1116).